A 151-amino-acid chain; its full sequence is ALK and LTK ligand 2 (151 aa).

The first 25 residues, 1–25, serve as a signal peptide directing secretion; the sequence is MRVSGRPMLLALLLLLSTVGDRGRA. 2 disulfides stabilise this stretch: cysteine 112–cysteine 148 and cysteine 126–cysteine 135.

Belongs to the ALKAL family. Homodimer.

It localises to the secreted. The protein resides in the cell membrane. Functionally, cytokine that acts as a physiological ligand for receptor tyrosine kinases LTK and ALK, leading to their activation. Cytokine-binding is sufficient to activate LTK. In contrast, ALKAL2-driven activation of ALK is coupled with heparin-binding to ALK. Stimulation of ALK signaling is involved in neural development and regulation of energy expenditure. The sequence is that of ALK and LTK ligand 2 from Mus musculus (Mouse).